A 490-amino-acid chain; its full sequence is Cytochrome P450 2C55 (490 aa).

Cys-435 is a binding site for heme.

Belongs to the cytochrome P450 family. Heme is required as a cofactor. In terms of tissue distribution, highest level in colon. Low levels in liver and small intestine.

It localises to the endoplasmic reticulum membrane. The protein localises to the microsome membrane. The catalysed reaction is an organic molecule + reduced [NADPH--hemoprotein reductase] + O2 = an alcohol + oxidized [NADPH--hemoprotein reductase] + H2O + H(+). Metabolizes arachidonic acid mainly to 19-hydroxyeicosatetraenoic acid (HETE). The chain is Cytochrome P450 2C55 from Mus musculus (Mouse).